The chain runs to 227 residues: Cytochrome c oxidase subunit 2 (227 aa).

The Mitochondrial intermembrane segment spans residues 1–14 (MAYPFQLGLQDATS). The chain crosses the membrane as a helical span at residues 15–45 (PIMEELLHFHDHTLMIVFLISSLVLYIISLM). The Mitochondrial matrix portion of the chain corresponds to 46-59 (LTTKLTHTSTMDAQ). The chain crosses the membrane as a helical span at residues 60–87 (EVETVWTILPAIILILIALPSLRILYMM). Residues 88-227 (DEINNPSLTV…YFETWSALMV (140 aa)) lie on the Mitochondrial intermembrane side of the membrane. Positions 161, 196, 198, 200, 204, and 207 each coordinate Cu cation. E198 provides a ligand contact to Mg(2+). Y218 is modified (phosphotyrosine).

Belongs to the cytochrome c oxidase subunit 2 family. As to quaternary structure, component of the cytochrome c oxidase (complex IV, CIV), a multisubunit enzyme composed of 14 subunits. The complex is composed of a catalytic core of 3 subunits MT-CO1, MT-CO2 and MT-CO3, encoded in the mitochondrial DNA, and 11 supernumerary subunits COX4I, COX5A, COX5B, COX6A, COX6B, COX6C, COX7A, COX7B, COX7C, COX8 and NDUFA4, which are encoded in the nuclear genome. The complex exists as a monomer or a dimer and forms supercomplexes (SCs) in the inner mitochondrial membrane with NADH-ubiquinone oxidoreductase (complex I, CI) and ubiquinol-cytochrome c oxidoreductase (cytochrome b-c1 complex, complex III, CIII), resulting in different assemblies (supercomplex SCI(1)III(2)IV(1) and megacomplex MCI(2)III(2)IV(2)). Found in a complex with TMEM177, COA6, COX18, COX20, SCO1 and SCO2. Interacts with TMEM177 in a COX20-dependent manner. Interacts with COX20. Interacts with COX16. Cu cation serves as cofactor.

The protein localises to the mitochondrion inner membrane. The catalysed reaction is 4 Fe(II)-[cytochrome c] + O2 + 8 H(+)(in) = 4 Fe(III)-[cytochrome c] + 2 H2O + 4 H(+)(out). Its function is as follows. Component of the cytochrome c oxidase, the last enzyme in the mitochondrial electron transport chain which drives oxidative phosphorylation. The respiratory chain contains 3 multisubunit complexes succinate dehydrogenase (complex II, CII), ubiquinol-cytochrome c oxidoreductase (cytochrome b-c1 complex, complex III, CIII) and cytochrome c oxidase (complex IV, CIV), that cooperate to transfer electrons derived from NADH and succinate to molecular oxygen, creating an electrochemical gradient over the inner membrane that drives transmembrane transport and the ATP synthase. Cytochrome c oxidase is the component of the respiratory chain that catalyzes the reduction of oxygen to water. Electrons originating from reduced cytochrome c in the intermembrane space (IMS) are transferred via the dinuclear copper A center (CU(A)) of subunit 2 and heme A of subunit 1 to the active site in subunit 1, a binuclear center (BNC) formed by heme A3 and copper B (CU(B)). The BNC reduces molecular oxygen to 2 water molecules using 4 electrons from cytochrome c in the IMS and 4 protons from the mitochondrial matrix. The chain is Cytochrome c oxidase subunit 2 (MT-CO2) from Canis mesomelas elongae (Eastern African black-backed jackal).